The primary structure comprises 1202 residues: Calmodulin-binding transcription activator 2 (1202 aa).

The segment at residues 30 to 155 is a DNA-binding region (CG-1); it reads RCPLLPPERL…YLNVPALEDC (126 aa). The short motif at 79-86 is the Nuclear localization signal element; it reads RKKVKYRK. Disordered regions lie at residues 263-322, 361-409, and 421-491; these read SIPH…SRGG, GTEP…AHTP, and PQAA…LFGG. Over residues 270-283 the composition is skewed to pro residues; sequence PEPPPLIAPLPPEL. 2 stretches are compositionally biased toward low complexity: residues 289 to 299 and 313 to 322; these read SPSSSSSSSSS and TSRGGSSRGG. Composition is skewed to pro residues over residues 365–374 and 460–476; these read SAPPAPPSPA and PPIPSPPPSPPPSPAPL. In terms of domain architecture, IPT/TIG spans 537-615; the sequence is DFSPEWSYPE…LSASVLFEYR (79 aa). ANK repeat units lie at residues 712–745, 757–787, and 791–821; these read MSLLHLAAAQGYARLIETLSQWRSVETGSLDLEQ, CTPLMWACALGHLEAAVLLFRWNRQALSIPD, and RLPLSVAHSRGHVRLARCLEELQRQEPSVEP. 2 disordered regions span residues 817 to 874 and 906 to 929; these read PSVE…ASEM and PLSSLPALPPASDDGAAPEDADSP. Low complexity-rich tracts occupy residues 826-846 and 906-917; these read SPPSSSPDTGLSSVSSPSELS and PLSSLPALPPAS. 2 IQ domains span residues 1049 to 1078 and 1102 to 1131; these read YEAARVIQTAFRKYKGRRLKEQQEVAAAVI and TQAAILIQSKFRSYYEQKRFQQSRRAAVLI.

The protein belongs to the CAMTA family. As to quaternary structure, may interact with calmodulin. As to expression, detected in brain. Expressed at constant levels throughout the cell cycle in neuroblastoma cell lines.

Its subcellular location is the nucleus. In terms of biological role, transcription activator. May act as tumor suppressor. In Homo sapiens (Human), this protein is Calmodulin-binding transcription activator 2 (CAMTA2).